A 124-amino-acid chain; its full sequence is Small ribosomal subunit protein eS6 (124 aa).

Belongs to the eukaryotic ribosomal protein eS6 family.

The chain is Small ribosomal subunit protein eS6 from Thermoplasma acidophilum (strain ATCC 25905 / DSM 1728 / JCM 9062 / NBRC 15155 / AMRC-C165).